The primary structure comprises 1984 residues: Sodium channel protein type 9 subunit alpha (1984 aa).

The Cytoplasmic segment spans residues 1-125 (MAMLPPPGPQ…RRISIKILVH (125 aa)). Over residues 26-39 (RISEEKAKEHKDEK) the composition is skewed to basic and acidic residues. Positions 26 to 55 (RISEEKAKEHKDEKKDDEEEGPKPSSDLEA) are disordered. The stretch at 112 to 410 (FSPLRRISIK…VAMAYEEQNQ (299 aa)) is one I repeat. A helical membrane pass occupies residues 126 to 145 (SLFSMLIMCTILTNCIFMTL). The Extracellular segment spans residues 146–150 (SNPPE). Residues 151-172 (WTKNVEYTFTGIYTFESLIKIL) form a helical membrane-spanning segment. The Cytoplasmic portion of the chain corresponds to 173-185 (ARGFCVGEFTFLR). A helical membrane pass occupies residues 186-204 (DPWNWLDFVVIVFAYLTEF). Residues 205–210 (VNLGNV) are Extracellular-facing. N209 carries an N-linked (GlcNAc...) asparagine glycan. The chain crosses the membrane as a helical span at residues 211 to 227 (SALRTFRVLRALKTISV). Residues 228-241 (IPGLKTIVGALIQS) lie on the Cytoplasmic side of the membrane. The helical transmembrane segment at 242 to 267 (VKKLSDVMILTVFCLSVFALIGLQLF) threads the bilayer. The Extracellular portion of the chain corresponds to 268-346 (MGNLKHKCFR…PDYGYTSFDT (79 aa)). C275 and C324 are oxidised to a cystine. The N-linked (GlcNAc...) asparagine glycan is linked to N283. Positions 347–363 (FSWAFLALFRLMTQDYW) form an intramembrane region, pore-forming. Topologically, residues 364–376 (ENLYQQTLRAAGK) are extracellular. Residues 377–402 (TYMIFFVVVIFLGSFYLINLILAVVA) traverse the membrane as a helical segment. Residues 403 to 744 (MAYEEQNQAN…LIYFIVMDPF (342 aa)) are Cytoplasmic-facing. Over residues 461–471 (SSSETSRLSSK) the composition is skewed to low complexity. 2 disordered regions span residues 461–542 (SSSE…RGSL) and 576–609 (IFGDNESRRGSLFVPHRPRERRSSNISQASRSPP). The segment covering 474–486 (KERRNRRKKKKQK) has biased composition (basic residues). The segment covering 489–509 (SGEEKGDDEKLSKSGSEESIR) has biased composition (basic and acidic residues). An II repeat occupies 725-988 (CSPYWIKFKK…EEDTDANNLQ (264 aa)). A helical membrane pass occupies residues 745–761 (VDLAITICIVLNTLFMA). The Extracellular segment spans residues 762–770 (MEHHPMTEE). Residues 771–795 (FKNVLAVGNLIFTGIFAAEMVLKLI) traverse the membrane as a helical segment. At 796-804 (AMDPYEYFQ) the chain is on the cytoplasmic side. The helical transmembrane segment at 805 to 821 (VGWNIFDSLIVTLSLIE) threads the bilayer. The Extracellular segment spans residues 822–830 (LFLADVEGL). A helical membrane pass occupies residues 831-847 (SVLRSFRLLRVFKLAKS). At 848 to 864 (WPTLNMLIKIIGNSVGA) the chain is on the cytoplasmic side. Residues 865 to 887 (LGNLTLVLAIIVFIFAVVGMQLF) traverse the membrane as a helical segment. Topologically, residues 888–914 (GKSYKECVCKINVDCKLPRWHMNDFFH) are extracellular. C896 and C902 are oxidised to a cystine. The pore-forming intramembrane region spans 915–927 (SFLIVFRVLCGEW). Over 928 to 939 (IETMWDCMEVAG) the chain is Extracellular. The cysteines at positions 934 and 943 are disulfide-linked. Residues 940-966 (QTMCLIVYMMVMVIGNLVVLNLFLALL) traverse the membrane as a helical segment. The Cytoplasmic segment spans residues 967-1185 (LSSFSSDNLT…WWTIRKTCYR (219 aa)). 2 disordered regions span residues 1015–1040 (KKPKGSKDTKRTADPNNKKENYISNR) and 1103–1145 (EELS…EPVN). Basic and acidic residues predominate over residues 1019-1035 (GSKDTKRTADPNNKKEN). The segment covering 1135 to 1145 (GEEEAEAEPVN) has biased composition (acidic residues). The stretch at 1178 to 1486 (TIRKTCYRIV…KKYYNAMKKL (309 aa)) is one III repeat. Residues 1186-1210 (IVEHSWFESFIVLMILLSSGALAFE) traverse the membrane as a helical segment. Residues 1211–1222 (DIYIEKKKTIKI) are Extracellular-facing. The helical transmembrane segment at 1223 to 1248 (ILEYADKIFTYIFILEMLLKWVAYGY) threads the bilayer. Residues 1249–1250 (KT) are Cytoplasmic-facing. Residues 1251–1276 (YFTNAWCWLDFLIVDVSLVTLVANTL) traverse the membrane as a helical segment. The Extracellular segment spans residues 1277 to 1285 (GYSDLGPIK). The chain crosses the membrane as a helical span at residues 1286-1302 (SLRTLRALRPLRALSRF). Topologically, residues 1303–1315 (EGMRVVVNALIGA) are cytoplasmic. The chain crosses the membrane as a helical span at residues 1316-1340 (IPSIMNVLLVCLIFWLIFSIMGVNL). Over 1341–1392 (FAGKFYECVNTTDGSRFPTSQVANRSECFALMNVSGNVRWKNLKVNFDNVGL) the chain is Extracellular. An intrachain disulfide couples C1348 to C1368. 3 N-linked (GlcNAc...) asparagine glycosylation sites follow: N1350, N1364, and N1373. An intramembrane region (pore-forming) is located at residues 1393–1403 (GYLSLLQVATF). Over 1404–1429 (KGWMDIMYAAVDSVNVNEQPKYEYSL) the chain is Extracellular. The helical transmembrane segment at 1430–1455 (YMYIYFVIFIIFGSFFTLNLFIGVII) threads the bilayer. Residues 1456–1512 (DNFNQQKKKLGGQDIFMTEEQKKYYNAMKKLGSKKPQKPIPRPGNKFQGCIFDLVTN) are Cytoplasmic-facing. Phosphoserine; by PKC is present on S1488. The stretch at 1495 to 1793 (IPRPGNKFQG…WEKFDPDATQ (299 aa)) is one IV repeat. A helical membrane pass occupies residues 1513–1532 (QAFDITIMVLICLNMVTMMV). Topologically, residues 1533–1543 (EKEGQTEYMDY) are extracellular. The helical transmembrane segment at 1544–1565 (VLHWINMVFIILFTGECVLKLI) threads the bilayer. At 1566-1574 (SLRHYYFTV) the chain is on the cytoplasmic side. A helical transmembrane segment spans residues 1575–1596 (GWNIFDFVVVILSIVGMFLAEM). Residues 1597-1605 (IEKYFVSPT) lie on the Extracellular side of the membrane. A helical membrane pass occupies residues 1606–1625 (LFRVIRLARIGRILRLIKGA). Residues 1626–1638 (KGIRTLLFALMMS) lie on the Cytoplasmic side of the membrane. A helical transmembrane segment spans residues 1639–1661 (LPALFNIGLLLFLVMFIYAIFGM). At 1662 to 1684 (SNFAYVKKEAGINDMFNFETFGN) the chain is on the extracellular side. The pore-forming intramembrane region spans 1685–1697 (SMICLFQITTSAG). At 1698–1731 (WDGLLAPILNSAPPDCDPKKVHPGSSVEGDCGNP) the chain is on the extracellular side. C1713 and C1728 form a disulfide bridge. The chain crosses the membrane as a helical span at residues 1732–1757 (SVGIFYFVSYIIISFLVVVNMYIAVI). Topologically, residues 1758-1984 (LENFSVATEE…EDKEKDESRK (227 aa)) are cytoplasmic. The IQ domain maps to 1887-1916 (EEVSATIIQRAYRRYRLRQHVKNISSIYIK). The segment covering 1916 to 1930 (KDGDRDDDLPNKEDT) has biased composition (basic and acidic residues). A disordered region spans residues 1916–1984 (KDGDRDDDLP…EDKEKDESRK (69 aa)). The span at 1946-1958 (VTASTISPPSYDS) shows a compositional bias: polar residues. Residues 1960–1984 (TKPDQEKYETDKTEKEDKEKDESRK) show a composition bias toward basic and acidic residues.

This sequence belongs to the sodium channel (TC 1.A.1.10) family. Nav1.7/SCN9A subfamily. In terms of assembly, the Nav1.7 voltage-gated sodium channel consists of an ion-conducting alpha subunit SCN9A which is functional on its own regulated by one or more beta-1 (SCN1B), beta-2 (SCN2B), beta-3 (SCN3B) and beta-4 (SCN4B) subunits. SCN1B and SCN3B are non-covalently associated with SCN9A. SCN2B and SCN4B are disulfide-linked to SCN9A. SCN1B regulates channel inactivation. Interacts with NEDD4 and NEDD4L; regulates Nav1.7 activity most probably through ubiquitination and subsequent endocytosis. Interacts with TMEM233; modulates the gating properties of NaV1.7. Post-translationally, phosphorylation at Ser-1488 by PKC in a highly conserved cytoplasmic loop increases peak sodium currents. In terms of processing, ubiquitinated by NEDD4L; which may promote its endocytosis. Does not seem to be ubiquitinated by NEDD4. Ubiquitinated by NEDD4L; which may promote its endocytosis. Expressed at high level in the dorsal root ganglion and at much lower levels in the brain, sciatic nerve, nodose ganglia, heart, thyroid and adrenal glands and Schwann cells, but not in the cardiac and skeletal muscles, brain and liver.

The protein resides in the cell membrane. It localises to the cell projection. The protein localises to the neuron projection. Its subcellular location is the axon. The catalysed reaction is Na(+)(in) = Na(+)(out). Its activity is regulated as follows. Inhibited by the conotoxin GVIIJ. Its function is as follows. Pore-forming subunit of Nav1.7, a voltage-gated sodium (Nav) channel that directly mediates the depolarizing phase of action potentials in excitable membranes. Navs, also called VGSCs (voltage-gated sodium channels) or VDSCs (voltage-dependent sodium channels), operate by switching between closed and open conformations depending on the voltage difference across the membrane. In the open conformation they allow Na(+) ions to selectively pass through the pore, along their electrochemical gradient. The influx of Na(+) ions provokes membrane depolarization, initiating the propagation of electrical signals throughout cells and tissues. Nav1.7 plays a crucial role in controlling the excitability and action potential propagation from nociceptor neurons, thereby contributing to the sensory perception of pain. The polypeptide is Sodium channel protein type 9 subunit alpha (Rattus norvegicus (Rat)).